The primary structure comprises 86 residues: MVWAGVKLLHGYRYLLSPWIGNQCRFYPSCSHYAEEALKTHGFLAGIYLTARRLIKCHPWHPGGIDPVPEHEATCCSHTHPTHGKH.

This sequence belongs to the UPF0161 family.

The protein resides in the cell inner membrane. Its function is as follows. Could be involved in insertion of integral membrane proteins into the membrane. This chain is Putative membrane protein insertion efficiency factor, found in Cellvibrio japonicus (strain Ueda107) (Pseudomonas fluorescens subsp. cellulosa).